The sequence spans 736 residues: RNA-binding protein RMD9-like, mitochondrial (736 aa).

Disordered regions lie at residues 1–28 (MFRF…KTNS), 124–148 (PRRS…HPNT), and 566–618 (NRGI…GTPV). The N-terminal 79 residues, 1–79 (MFRFAQPANV…HFKNQFSSRN (79 aa)), are a transit peptide targeting the mitochondrion. The segment covering 125 to 140 (RRSNMRNNGNNNMNNG) has biased composition (low complexity). A compositionally biased stretch (polar residues) spans 566–578 (NRGISSSSPMSAV). A compositionally biased stretch (low complexity) spans 579 to 596 (NSLAPSTTNTPSPSLSPI). Residues 602 to 613 (LSSARNTPNKIW) are compositionally biased toward polar residues.

It belongs to the RMD9 family. In terms of assembly, monomer. Phosphorylated. Phosphorylation promotes binding to RNA.

The protein resides in the mitochondrion inner membrane. Functionally, may be involved in the processing or stability of mitochondrial mRNAs. In Candida glabrata (strain ATCC 2001 / BCRC 20586 / JCM 3761 / NBRC 0622 / NRRL Y-65 / CBS 138) (Yeast), this protein is RNA-binding protein RMD9-like, mitochondrial.